Consider the following 338-residue polypeptide: Ketol-acid reductoisomerase (NADP(+)) (338 aa).

Positions Met-1–Thr-181 constitute a KARI N-terminal Rossmann domain. NADP(+) contacts are provided by residues Tyr-24–Gln-27, Arg-47, Ser-50, Thr-52, and Asp-82–Gln-85. His-107 is an active-site residue. Gly-133 provides a ligand contact to NADP(+). One can recognise a KARI C-terminal knotted domain in the interval Thr-182–Ile-327. Mg(2+) is bound by residues Asp-190, Glu-194, Glu-226, and Glu-230. Residue Ser-251 coordinates substrate.

Belongs to the ketol-acid reductoisomerase family. Requires Mg(2+) as cofactor.

The catalysed reaction is (2R)-2,3-dihydroxy-3-methylbutanoate + NADP(+) = (2S)-2-acetolactate + NADPH + H(+). It catalyses the reaction (2R,3R)-2,3-dihydroxy-3-methylpentanoate + NADP(+) = (S)-2-ethyl-2-hydroxy-3-oxobutanoate + NADPH + H(+). Its pathway is amino-acid biosynthesis; L-isoleucine biosynthesis; L-isoleucine from 2-oxobutanoate: step 2/4. It functions in the pathway amino-acid biosynthesis; L-valine biosynthesis; L-valine from pyruvate: step 2/4. Functionally, involved in the biosynthesis of branched-chain amino acids (BCAA). Catalyzes an alkyl-migration followed by a ketol-acid reduction of (S)-2-acetolactate (S2AL) to yield (R)-2,3-dihydroxy-isovalerate. In the isomerase reaction, S2AL is rearranged via a Mg-dependent methyl migration to produce 3-hydroxy-3-methyl-2-ketobutyrate (HMKB). In the reductase reaction, this 2-ketoacid undergoes a metal-dependent reduction by NADPH to yield (R)-2,3-dihydroxy-isovalerate. The sequence is that of Ketol-acid reductoisomerase (NADP(+)) from Pseudomonas putida (strain W619).